The sequence spans 326 residues: tRNA-modifying protein YgfZ (326 aa).

Residues Trp27 and Trp189 each contribute to the folate site.

Belongs to the tRNA-modifying YgfZ family.

The protein localises to the cytoplasm. Functionally, folate-binding protein involved in regulating the level of ATP-DnaA and in the modification of some tRNAs. It is probably a key factor in regulatory networks that act via tRNA modification, such as initiation of chromosomal replication. The protein is tRNA-modifying protein YgfZ of Escherichia fergusonii (strain ATCC 35469 / DSM 13698 / CCUG 18766 / IAM 14443 / JCM 21226 / LMG 7866 / NBRC 102419 / NCTC 12128 / CDC 0568-73).